A 780-amino-acid polypeptide reads, in one-letter code: Acetyl-CoA decarbonylase/synthase complex subunit alpha (780 aa).

Residues cysteine 73, cysteine 76, cysteine 77, cysteine 79, cysteine 84, and cysteine 93 each contribute to the [4Fe-4S] cluster site. Histidine 116 lines the CO pocket. Residues histidine 250, cysteine 278, and cysteine 317 each coordinate [Ni-4Fe-4S] cluster. 2 consecutive 4Fe-4S ferredoxin-type domains span residues 399-429 (IDEI…MDAV) and 440-469 (LEEM…VSMV). [4Fe-4S] cluster contacts are provided by cysteine 409, cysteine 412, cysteine 415, cysteine 419, cysteine 449, cysteine 452, cysteine 455, and cysteine 459. Cysteine 517, cysteine 546, and cysteine 581 together coordinate [Ni-4Fe-4S] cluster.

This sequence belongs to the Ni-containing carbon monoxide dehydrogenase family. As to quaternary structure, heterotetramer of two alpha and two epsilon subunits. The ACDS complex is made up of alpha, epsilon, beta, gamma and delta subunits with a probable stoichiometry of (alpha(2)epsilon(2))(4)-beta(8)-(gamma(1)delta(1))(8). It depends on [4Fe-4S] cluster as a cofactor. Requires [Ni-4Fe-4S] cluster as cofactor.

It catalyses the reaction CO + 2 oxidized [2Fe-2S]-[ferredoxin] + H2O = 2 reduced [2Fe-2S]-[ferredoxin] + CO2 + 2 H(+). Part of the ACDS complex that catalyzes the reversible cleavage of acetyl-CoA, allowing autotrophic growth from CO(2). The alpha-epsilon subcomponent functions as a carbon monoxide dehydrogenase. This is Acetyl-CoA decarbonylase/synthase complex subunit alpha from Methanothermobacter thermautotrophicus (strain ATCC 29096 / DSM 1053 / JCM 10044 / NBRC 100330 / Delta H) (Methanobacterium thermoautotrophicum).